The following is a 337-amino-acid chain: UDP-3-O-acylglucosamine N-acyltransferase 2 (337 aa).

H238 acts as the Proton acceptor in catalysis.

The protein belongs to the transferase hexapeptide repeat family. LpxD subfamily. Homotrimer.

The catalysed reaction is a UDP-3-O-[(3R)-3-hydroxyacyl]-alpha-D-glucosamine + a (3R)-hydroxyacyl-[ACP] = a UDP-2-N,3-O-bis[(3R)-3-hydroxyacyl]-alpha-D-glucosamine + holo-[ACP] + H(+). It functions in the pathway bacterial outer membrane biogenesis; LPS lipid A biosynthesis. Its function is as follows. Catalyzes the N-acylation of UDP-3-O-acylglucosamine using 3-hydroxyacyl-ACP as the acyl donor. Is involved in the biosynthesis of lipid A, a phosphorylated glycolipid that anchors the lipopolysaccharide to the outer membrane of the cell. The chain is UDP-3-O-acylglucosamine N-acyltransferase 2 from Francisella tularensis subsp. tularensis (strain FSC 198).